Reading from the N-terminus, the 503-residue chain is Lysine--tRNA ligase (503 aa).

Residues glutamate 412 and glutamate 419 each contribute to the Mg(2+) site.

It belongs to the class-II aminoacyl-tRNA synthetase family. As to quaternary structure, homodimer. It depends on Mg(2+) as a cofactor.

It localises to the cytoplasm. It catalyses the reaction tRNA(Lys) + L-lysine + ATP = L-lysyl-tRNA(Lys) + AMP + diphosphate. The protein is Lysine--tRNA ligase of Idiomarina loihiensis (strain ATCC BAA-735 / DSM 15497 / L2-TR).